The sequence spans 747 residues: Sushi domain-containing protein 1 (747 aa).

The signal sequence occupies residues 1 to 29; it reads MGRGPWDAGPSRRLLPLLLLLGLARGAAG. The Extracellular segment spans residues 30–721; sequence APGPDGLDVC…WAQVKDSSLM (692 aa). An EGF-like 1 domain is found at 35–72; it reads GLDVCATCHEHATCQQREGKKICICNYGFVGNGRTQCV. 5 disulfide bridges follow: cysteine 39–cysteine 48, cysteine 42–cysteine 57, cysteine 59–cysteine 71, cysteine 77–cysteine 91, and cysteine 85–cysteine 100. The region spanning 73 to 112 is the EGF-like 2; calcium-binding domain; that stretch reads DKNECQFGATLVCGNHTSCHNTPGGFYCICLEGYRATNNN. 2 N-linked (GlcNAc...) asparagine glycosylation sites follow: asparagine 87 and asparagine 112. The EGF-like 3; calcium-binding domain occupies 125–162; it reads DIDECEVSGLCRHGGRCVNTHGSFECYCMDGYLPRNGP. Intrachain disulfides connect cysteine 129–cysteine 141, cysteine 135–cysteine 150, cysteine 179–cysteine 221, cysteine 206–cysteine 234, cysteine 239–cysteine 281, and cysteine 266–cysteine 294. 2 Sushi domains span residues 177-236 and 237-296; these read IDCG…HCQE and INCG…TCTE. N-linked (GlcNAc...) asparagine glycosylation occurs at asparagine 193. Asparagine 253 is a glycosylation site (N-linked (GlcNAc...) asparagine). N-linked (GlcNAc...) asparagine glycosylation is found at asparagine 348, asparagine 367, and asparagine 563. Residues 722–742 form a helical membrane-spanning segment; sequence LLQMAGVGLGSLAVVIILTFL. Over 743–747 the chain is Cytoplasmic; it reads SFSAV.

The protein resides in the membrane. This Homo sapiens (Human) protein is Sushi domain-containing protein 1 (SUSD1).